The following is a 298-amino-acid chain: Ethanolamine ammonia-lyase small subunit (298 aa).

Adenosylcob(III)alamin is bound by residues V210, E231, and C261.

The protein belongs to the EutC family. In terms of assembly, the basic unit is a heterodimer which dimerizes to form tetramers. The heterotetramers trimerize; 6 large subunits form a core ring with 6 small subunits projecting outwards. The cofactor is adenosylcob(III)alamin.

It localises to the bacterial microcompartment. It catalyses the reaction ethanolamine = acetaldehyde + NH4(+). It functions in the pathway amine and polyamine degradation; ethanolamine degradation. Its function is as follows. Catalyzes the deamination of various vicinal amino-alcohols to oxo compounds. Allows this organism to utilize ethanolamine as the sole source of nitrogen and carbon in the presence of external vitamin B12. The chain is Ethanolamine ammonia-lyase small subunit from Salmonella typhi.